A 541-amino-acid chain; its full sequence is Putative apolipoprotein N-acyltransferase (541 aa).

A run of 6 helical transmembrane segments spans residues 31-51 (PLPA…AAHA), 65-85 (GWLF…VSMH), 89-109 (GLAA…LALF), 144-164 (AACW…FPWL), 181-201 (LLGV…LAGL), and 215-235 (LAAG…QFSW). A CN hydrolase domain is found at 248-511 (VQGNVEQSQK…AGVLPVAVQG (264 aa)). Catalysis depends on Glu-292, which acts as the Proton acceptor. Residue Lys-366 is part of the active site. Catalysis depends on Cys-416, which acts as the Nucleophile.

It belongs to the CN hydrolase family. Apolipoprotein N-acyltransferase subfamily.

It is found in the cell inner membrane. The enzyme catalyses N-terminal S-1,2-diacyl-sn-glyceryl-L-cysteinyl-[lipoprotein] + a glycerophospholipid = N-acyl-S-1,2-diacyl-sn-glyceryl-L-cysteinyl-[lipoprotein] + a 2-acyl-sn-glycero-3-phospholipid + H(+). Its pathway is protein modification; lipoprotein biosynthesis (N-acyl transfer). Catalyzes the phospholipid dependent N-acylation of the N-terminal cysteine of apolipoprotein, the last step in lipoprotein maturation. The protein is Putative apolipoprotein N-acyltransferase of Bordetella parapertussis (strain 12822 / ATCC BAA-587 / NCTC 13253).